The sequence spans 214 residues: Large ribosomal subunit protein uL3 (214 aa).

Q153 carries the N5-methylglutamine modification.

The protein belongs to the universal ribosomal protein uL3 family. Part of the 50S ribosomal subunit. Forms a cluster with proteins L14 and L19. Methylated by PrmB.

Functionally, one of the primary rRNA binding proteins, it binds directly near the 3'-end of the 23S rRNA, where it nucleates assembly of the 50S subunit. The polypeptide is Large ribosomal subunit protein uL3 (Aromatoleum aromaticum (strain DSM 19018 / LMG 30748 / EbN1) (Azoarcus sp. (strain EbN1))).